The primary structure comprises 147 residues: Hemoglobin subunit epsilon (147 aa).

Residues 3 to 147 (HFTAEEKATI…VATALAHKYH (145 aa)) enclose the Globin domain. Phosphoserine is present on residues Ser-14 and Ser-51. Heme b contacts are provided by His-64 and His-93.

Belongs to the globin family. In terms of assembly, heterotetramer of two alpha chains and two epsilon chains in early embryonic hemoglobin Gower-2; two zeta chains and two epsilon chains in early embryonic hemoglobin Gower-1. Red blood cells.

Functionally, the epsilon chain is a beta-type chain of early mammalian embryonic hemoglobin. The polypeptide is Hemoglobin subunit epsilon (HBE1) (Daubentonia madagascariensis (Aye-aye)).